Consider the following 1708-residue polypeptide: Clathrin heavy chain 1 (1708 aa).

The globular terminal domain stretch occupies residues 1 to 492; the sequence is MAAANAPIAM…VDNDLALKIY (492 aa). WD40-like repeat regions lie at residues 25-67, 68-113, 114-155, 156-205, 206-270, 271-314, and 315-343; these read FVTF…RPIT, ADSA…MPEQ, VVFW…ANLA, NNQI…QALE, AHAA…PDFQ, DDFP…ISPD, and PIFL…ATVN. The segment at 462 to 478 is binding site for the uncoating ATPase, involved in lattice disassembly; sequence ENWLAEDKLECSEELGD. A flexible linker region spans residues 493-536; the sequence is IKARATPKVVAAFAERREFDKILIYSKQVGYTPDYLFLLQTILR. Residues 537–648 are distal segment; that stretch reads TDPQGAVNFA…RALQHYTELP (112 aa). The heavy chain arm stretch occupies residues 537–1708; sequence TDPQGAVNFA…AYGMPPMGSY (1172 aa). CHCR repeat units lie at residues 551–697, 700–842, 847–986, 993–1138, 1142–1283, 1288–1434, and 1437–1580; these read QMEG…QIVV, AKEY…PEDF, ILSV…QLID, LPES…VSEA, FIRA…FRLA, LNII…DLIN, and LNVL…KECF. Positions 653 to 1708 are proximal segment; it reads VMVNTHAIEP…AYGMPPMGSY (1056 aa). The segment at 1227–1536 is involved in binding clathrin light chain; sequence AAKIIYAFIS…YIYKKAGRWK (310 aa). Residues 1564-1708 form a trimerization region; sequence SEDLLVYFIE…AYGMPPMGSY (145 aa).

Belongs to the clathrin heavy chain family. In terms of assembly, clathrin triskelions, composed of 3 heavy chains and 3 light chains, are the basic subunits of the clathrin coat.

It localises to the cytoplasmic vesicle membrane. It is found in the membrane. Its subcellular location is the coated pit. In terms of biological role, clathrin is the major protein of the polyhedral coat of coated pits and vesicles. This Oryza sativa subsp. japonica (Rice) protein is Clathrin heavy chain 1.